Consider the following 680-residue polypeptide: Fermitin family homolog 2 (680 aa).

The tract at residues 40 to 81 is interaction with membranes containing phosphatidylinositol phosphate; the sequence is HIGGVMLKLVEKLDVKKDWSDHALWWEKKRTWLLKTHWTLDK. Residues 141 to 165 form a disordered region; the sequence is LKKPRDPTKKKKKKLDDQSEDEALE. 4 positions are modified to phosphoserine: Ser159, Ser181, Ser339, and Ser351. Residues 189–661 form the FERM domain; the sequence is MTPTYDAHDG…GYIFLSTRAK (473 aa). The 97-residue stretch at 380-476 folds into the PH domain; sequence KVFKPKKLTL…WMAACRLASK (97 aa). Lys383 contacts a 1,2-diacyl-sn-glycero-3-phospho-(1D-myo-inositol-3,4,5-trisphosphate). Ser666 bears the Phosphoserine mark.

This sequence belongs to the kindlin family. In terms of assembly, interacts with ILK. Interacts with FBLIM1. Interacts with ITGB1 and ITGB3. Interacts with active, unphosphorylated CTNNB1. Identified in a complex with CTNNB1 and TCF7L2/TCF4. Interacts with ITGB1; the interaction is inhibited in presence of ITGB1BP1. Ubiquitous. Found in numerous tumor tissues.

The protein localises to the cytoplasm. The protein resides in the cell cortex. It is found in the cytoskeleton. Its subcellular location is the stress fiber. It localises to the cell junction. The protein localises to the focal adhesion. The protein resides in the membrane. It is found in the cell projection. Its subcellular location is the lamellipodium membrane. It localises to the nucleus. The protein localises to the myofibril. The protein resides in the sarcomere. It is found in the i band. Its subcellular location is the cell surface. In terms of biological role, scaffolding protein that enhances integrin activation mediated by TLN1 and/or TLN2, but activates integrins only weakly by itself. Binds to membranes enriched in phosphoinositides. Enhances integrin-mediated cell adhesion onto the extracellular matrix and cell spreading; this requires both its ability to interact with integrins and with phospholipid membranes. Required for the assembly of focal adhesions. Participates in the connection between extracellular matrix adhesion sites and the actin cytoskeleton and also in the orchestration of actin assembly and cell shape modulation. Recruits FBLIM1 to focal adhesions. Plays a role in the TGFB1 and integrin signaling pathways. Stabilizes active CTNNB1 and plays a role in the regulation of transcription mediated by CTNNB1 and TCF7L2/TCF4 and in Wnt signaling. The polypeptide is Fermitin family homolog 2 (FERMT2) (Homo sapiens (Human)).